Reading from the N-terminus, the 964-residue chain is Myocardin-related transcription factor A (964 aa).

The mediates interaction with SCAI and ACTB stretch occupies residues methionine 1 to aspartate 291. An RPEL 1 repeat occupies serine 15 to lysine 40. A Phosphoserine modification is found at serine 41. Residues serine 41–glutamate 58 form an intervening spacer sequence 1 region. The RPEL 2 repeat unit spans residues aspartate 59–serine 84. A Bipartite Nuclear localization signal motif is present at residues lysine 62–arginine 100. Positions alanine 85–alanine 102 are intervening spacer sequence 2. An RPEL 3 repeat occupies aspartate 103–serine 128. Disordered stretches follow at residues alanine 145–serine 292 and leucine 328–serine 371. Phosphoserine is present on residues serine 159, serine 174, and serine 191. Residues serine 186–serine 197 show a composition bias toward polar residues. Residues proline 215–proline 224 show a composition bias toward pro residues. Residues alanine 251–proline 266 show a composition bias toward basic and acidic residues. Residues glycine 340 to glycine 365 are compositionally biased toward low complexity. Serine 349 and serine 351 each carry phosphoserine. Threonine 352 is subject to Phosphothreonine. A phosphoserine mark is found at serine 355 and serine 358. The residue at position 360 (threonine 360) is a Phosphothreonine. Serine 371 is subject to Phosphoserine. In terms of domain architecture, SAP spans leucine 385–glutamine 419. Phosphoserine occurs at positions 423 and 484. The interval serine 484 to serine 508 is disordered. Threonine 485 bears the Phosphothreonine mark. Phosphoserine is present on serine 487. A Phosphothreonine modification is found at threonine 488. At serine 492 the chain carries Phosphoserine. Position 494 is a phosphothreonine (threonine 494). Serine 496 carries the post-translational modification Phosphoserine. Residues glutamate 497–serine 508 show a composition bias toward polar residues. Phosphoserine occurs at positions 520, 530, 544, and 548. Positions arginine 552 to glutamine 600 form a coiled coil. Residues serine 605, serine 606, serine 651, serine 687, serine 718, serine 724, and serine 728 each carry the phosphoserine modification. The disordered stretch occupies residues threonine 638–leucine 673. Disordered regions lie at residues asparagine 706–glutamine 779 and alanine 796–aspartate 849. The segment covering proline 715–glycine 727 has biased composition (low complexity). Polar residues predominate over residues threonine 764–glutamine 779. Residues alanine 796–serine 810 are compositionally biased toward basic and acidic residues. The residue at position 810 (serine 810) is a Phosphoserine. At threonine 822 the chain carries Phosphothreonine. Phosphoserine is present on residues serine 826 and serine 840. Threonine 842 carries the phosphothreonine modification. At serine 892 the chain carries Phosphoserine.

In terms of assembly, interacts with SRF, forming the SRF-MRTFA nuclear complex which binds the 5'-CArG-3' consensus motif (CArG box) on DNA via SRF. Interacts (via RPEL repeats) with globular actin (G-actin), thereby regulating its subcellular location and activity of the complex formed with SRF. Either forms a trivalent (by binding three G-actin monomers) or pentavalent (by binding five G-actin monomers) complex with G-actin. Forms a nuclear ternary complex with SCAI and SRF, leading to suppress MRTFA-induced SRF transcriptional activity. Interacts with beta-actin (ACTB); interaction with ACTB prevents interaction with SCAI. Interacts with MRTFB. Phosphorylation at Ser-41 by Erk inhibits binding of globular actin (G-actin), unmasking the nuclear localization signal (NLS) and promoting nuclear import. As to expression, expressed in heart, brain, spleen, lung, liver, muscle, kidney and testis.

It is found in the cytoplasm. The protein resides in the nucleus. Transcription coactivator that associates with the serum response factor (SRF) transcription factor to control expression of genes regulating the cytoskeleton during development, morphogenesis and cell migration. The SRF-MRTFA complex activity responds to Rho GTPase-induced changes in cellular globular actin (G-actin) concentration, thereby coupling cytoskeletal gene expression to cytoskeletal dynamics. MRTFA binds G-actin via its RPEL repeats, regulating activity of the MRTFA-SRF complex. Activity is also regulated by filamentous actin (F-actin) in the nucleus. This is Myocardin-related transcription factor A (Mrtfa) from Mus musculus (Mouse).